Here is a 666-residue protein sequence, read N- to C-terminus: UvrABC system protein B (666 aa).

The region spanning 26–414 (DSFQKGEKKV…KVVEQIIRPT (389 aa)) is the Helicase ATP-binding domain. Position 39 to 46 (39 to 46 (GVTGSGKT)) interacts with ATP. A Beta-hairpin motif is present at residues 92-115 (YYDYYQPEAYVPSSDTFIEKDSSI). Residues 429-591 (QIEDLLVEIR…ITPLTIKKEV (163 aa)) enclose the Helicase C-terminal domain. In terms of domain architecture, UVR spans 625–660 (EVLKEKLREEMMKAAKELDFERAAILRDKMLSIQTE).

Belongs to the UvrB family. As to quaternary structure, forms a heterotetramer with UvrA during the search for lesions. Interacts with UvrC in an incision complex.

The protein resides in the cytoplasm. Functionally, the UvrABC repair system catalyzes the recognition and processing of DNA lesions. A damage recognition complex composed of 2 UvrA and 2 UvrB subunits scans DNA for abnormalities. Upon binding of the UvrA(2)B(2) complex to a putative damaged site, the DNA wraps around one UvrB monomer. DNA wrap is dependent on ATP binding by UvrB and probably causes local melting of the DNA helix, facilitating insertion of UvrB beta-hairpin between the DNA strands. Then UvrB probes one DNA strand for the presence of a lesion. If a lesion is found the UvrA subunits dissociate and the UvrB-DNA preincision complex is formed. This complex is subsequently bound by UvrC and the second UvrB is released. If no lesion is found, the DNA wraps around the other UvrB subunit that will check the other stand for damage. The chain is UvrABC system protein B from Leptospira interrogans serogroup Icterohaemorrhagiae serovar copenhageni (strain Fiocruz L1-130).